We begin with the raw amino-acid sequence, 448 residues long: Exodeoxyribonuclease 7 large subunit (448 aa).

Belongs to the XseA family. In terms of assembly, heterooligomer composed of large and small subunits.

The protein localises to the cytoplasm. The catalysed reaction is Exonucleolytic cleavage in either 5'- to 3'- or 3'- to 5'-direction to yield nucleoside 5'-phosphates.. Bidirectionally degrades single-stranded DNA into large acid-insoluble oligonucleotides, which are then degraded further into small acid-soluble oligonucleotides. The sequence is that of Exodeoxyribonuclease 7 large subunit from Shewanella sp. (strain ANA-3).